A 235-amino-acid chain; its full sequence is Pyridoxine 5'-phosphate synthase (235 aa).

Asparagine 6 contacts 3-amino-2-oxopropyl phosphate. Residue 8-9 participates in 1-deoxy-D-xylulose 5-phosphate binding; it reads DH. Residue arginine 17 participates in 3-amino-2-oxopropyl phosphate binding. Catalysis depends on histidine 42, which acts as the Proton acceptor. Positions 44 and 49 each coordinate 1-deoxy-D-xylulose 5-phosphate. Glutamate 69 (proton acceptor) is an active-site residue. Position 99 (threonine 99) interacts with 1-deoxy-D-xylulose 5-phosphate. The active-site Proton donor is the histidine 189. 3-amino-2-oxopropyl phosphate contacts are provided by residues glycine 190 and 211 to 212; that span reads GH.

Belongs to the PNP synthase family. As to quaternary structure, homooctamer; tetramer of dimers.

It is found in the cytoplasm. The catalysed reaction is 3-amino-2-oxopropyl phosphate + 1-deoxy-D-xylulose 5-phosphate = pyridoxine 5'-phosphate + phosphate + 2 H2O + H(+). The protein operates within cofactor biosynthesis; pyridoxine 5'-phosphate biosynthesis; pyridoxine 5'-phosphate from D-erythrose 4-phosphate: step 5/5. Its function is as follows. Catalyzes the complicated ring closure reaction between the two acyclic compounds 1-deoxy-D-xylulose-5-phosphate (DXP) and 3-amino-2-oxopropyl phosphate (1-amino-acetone-3-phosphate or AAP) to form pyridoxine 5'-phosphate (PNP) and inorganic phosphate. The protein is Pyridoxine 5'-phosphate synthase of Chlorobium chlorochromatii (strain CaD3).